Reading from the N-terminus, the 260-residue chain is Cytochrome c oxidase subunit 2 (260 aa).

Residues 1 to 41 are Mitochondrial intermembrane-facing; it reads MIVREWLFFTMAPCDAAEPWQLGFQDAATPMMQGIIDLHHD. Residues 42–58 form a helical membrane-spanning segment; that stretch reads IFFFLILILVFVSWILV. The Mitochondrial matrix portion of the chain corresponds to 59–82; that stretch reads RALWHFHYKKNPIPQRIVHGTTIE. Residues 83-104 form a helical membrane-spanning segment; sequence IIRTIFPSIILMFIAIPSFALL. Residues 105–260 lie on the Mitochondrial intermembrane side of the membrane; it reads YSMDEVVVDP…NQLIPQTGEA (156 aa). Residues histidine 187, cysteine 222, glutamate 224, cysteine 226, histidine 230, and methionine 233 each contribute to the Cu cation site. A Mg(2+)-binding site is contributed by glutamate 224.

Belongs to the cytochrome c oxidase subunit 2 family. In terms of assembly, component of the cytochrome c oxidase (complex IV, CIV), a multisubunit enzyme composed of a catalytic core of 3 subunits and several supernumerary subunits. The complex exists as a monomer or a dimer and forms supercomplexes (SCs) in the inner mitochondrial membrane with ubiquinol-cytochrome c oxidoreductase (cytochrome b-c1 complex, complex III, CIII). Cu cation is required as a cofactor.

It localises to the mitochondrion inner membrane. It catalyses the reaction 4 Fe(II)-[cytochrome c] + O2 + 8 H(+)(in) = 4 Fe(III)-[cytochrome c] + 2 H2O + 4 H(+)(out). Functionally, component of the cytochrome c oxidase, the last enzyme in the mitochondrial electron transport chain which drives oxidative phosphorylation. The respiratory chain contains 3 multisubunit complexes succinate dehydrogenase (complex II, CII), ubiquinol-cytochrome c oxidoreductase (cytochrome b-c1 complex, complex III, CIII) and cytochrome c oxidase (complex IV, CIV), that cooperate to transfer electrons derived from NADH and succinate to molecular oxygen, creating an electrochemical gradient over the inner membrane that drives transmembrane transport and the ATP synthase. Cytochrome c oxidase is the component of the respiratory chain that catalyzes the reduction of oxygen to water. Electrons originating from reduced cytochrome c in the intermembrane space (IMS) are transferred via the dinuclear copper A center (CU(A)) of subunit 2 and heme A of subunit 1 to the active site in subunit 1, a binuclear center (BNC) formed by heme A3 and copper B (CU(B)). The BNC reduces molecular oxygen to 2 water molecules using 4 electrons from cytochrome c in the IMS and 4 protons from the mitochondrial matrix. The chain is Cytochrome c oxidase subunit 2 (COX2) from Beta vulgaris (Sugar beet).